Consider the following 560-residue polypeptide: MFS siderochrome iron transporter 1 (560 aa).

Asn29 carries N-linked (GlcNAc...) asparagine glycosylation. The next 11 membrane-spanning stretches (helical) occupy residues 53–73, 90–110, 115–135, 146–166, 177–194, 211–231, 264–284, 291–311, 331–351, 354–374, and 379–399; these read LWLT…LVSV, LLAS…LTLA, VWGR…ALIM, VAAH…VDVM, MIMF…TFAG, FGAF…IMLF, VVGI…FSIV, WATG…AIFL, PTII…LLTI, AGYV…GIGL, and FKWA…LLIP. Asn404 is a glycosylation site (N-linked (GlcNAc...) asparagine). 3 helical membrane passes run 407 to 427, 441 to 461, and 522 to 542; these read IGAV…FSVC, VAVV…VGLA, and VIAG…WRNV.

The protein belongs to the major facilitator superfamily.

Its subcellular location is the membrane. Functionally, major facilitator transporter involved in siderophore transport. The chain is MFS siderochrome iron transporter 1 from Ajellomyces capsulatus (Darling's disease fungus).